Here is a 196-residue protein sequence, read N- to C-terminus: Imidazole glycerol phosphate synthase subunit HisH (196 aa).

The Glutamine amidotransferase type-1 domain maps to 2–196 (KATLINYGVG…LRNFYSWVKR (195 aa)). Cysteine 76 (nucleophile) is an active-site residue. Catalysis depends on residues histidine 175 and glutamate 177.

Heterodimer of HisH and HisF.

It localises to the cytoplasm. It catalyses the reaction 5-[(5-phospho-1-deoxy-D-ribulos-1-ylimino)methylamino]-1-(5-phospho-beta-D-ribosyl)imidazole-4-carboxamide + L-glutamine = D-erythro-1-(imidazol-4-yl)glycerol 3-phosphate + 5-amino-1-(5-phospho-beta-D-ribosyl)imidazole-4-carboxamide + L-glutamate + H(+). The catalysed reaction is L-glutamine + H2O = L-glutamate + NH4(+). It functions in the pathway amino-acid biosynthesis; L-histidine biosynthesis; L-histidine from 5-phospho-alpha-D-ribose 1-diphosphate: step 5/9. In terms of biological role, IGPS catalyzes the conversion of PRFAR and glutamine to IGP, AICAR and glutamate. The HisH subunit catalyzes the hydrolysis of glutamine to glutamate and ammonia as part of the synthesis of IGP and AICAR. The resulting ammonia molecule is channeled to the active site of HisF. This is Imidazole glycerol phosphate synthase subunit HisH from Sulfurisphaera tokodaii (strain DSM 16993 / JCM 10545 / NBRC 100140 / 7) (Sulfolobus tokodaii).